The chain runs to 611 residues: Zinc metalloproteinase nas-31 (611 aa).

The signal sequence occupies residues Met1–Ser17. The propeptide occupies Gln18–Arg158. N-linked (GlcNAc...) asparagine glycans are attached at residues Asn53 and Asn67. The segment covering Asn82–Gln95 has biased composition (polar residues). The interval Asn82–Arg103 is disordered. The Peptidase M12A domain occupies Gln159 to Lys354. The N-linked (GlcNAc...) asparagine glycan is linked to Asn200. Intrachain disulfides connect Cys203/Cys353, Cys224/Cys243, Cys357/Cys376, Cys379/Cys390, Cys397/Cys428, Cys455/Cys476, Cys532/Cys564, Cys539/Cys557, and Cys548/Cys561. His251 contacts Zn(2+). Glu252 is a catalytic residue. Zn(2+) is bound by residues His255 and His261. The EGF-like domain occupies Gly340–Gly396. Residues Cys397 to Val516 enclose the CUB domain. An N-linked (GlcNAc...) asparagine glycan is attached at Asn424. The ShKT domain occupies Cys532–Cys564.

The cofactor is Zn(2+). In terms of tissue distribution, expressed in excretory cell and in amphid and phasmid sheath glia.

It is found in the secreted. In terms of biological role, metalloprotease. This chain is Zinc metalloproteinase nas-31 (nas-31), found in Caenorhabditis elegans.